A 692-amino-acid polypeptide reads, in one-letter code: Polyphosphate kinase (692 aa).

Asn-57 contacts ATP. The Mg(2+) site is built by Arg-383 and Arg-413. Residue His-443 is the Phosphohistidine intermediate of the active site. ATP contacts are provided by Tyr-476, Arg-572, and His-600.

Belongs to the polyphosphate kinase 1 (PPK1) family. The cofactor is Mg(2+). An intermediate of this reaction is the autophosphorylated ppk in which a phosphate is covalently linked to a histidine residue through a N-P bond.

The catalysed reaction is [phosphate](n) + ATP = [phosphate](n+1) + ADP. Its function is as follows. Catalyzes the reversible transfer of the terminal phosphate of ATP to form a long-chain polyphosphate (polyP). The chain is Polyphosphate kinase from Acinetobacter baumannii (strain AYE).